We begin with the raw amino-acid sequence, 348 residues long: Dihydroorotase (348 aa).

Zn(2+) is bound by residues His-17 and His-19. Residues 19 to 21 (HLR) and Asn-45 contribute to the substrate site. Zn(2+) contacts are provided by Lys-103, His-140, and His-178. Position 103 is an N6-carboxylysine (Lys-103). His-140 contacts substrate. Residue Leu-223 participates in substrate binding. Asp-251 is a Zn(2+) binding site. The active site involves Asp-251. His-255 and Ala-267 together coordinate substrate.

The protein belongs to the metallo-dependent hydrolases superfamily. DHOase family. Class II DHOase subfamily. Homodimer. Requires Zn(2+) as cofactor.

It carries out the reaction (S)-dihydroorotate + H2O = N-carbamoyl-L-aspartate + H(+). Its pathway is pyrimidine metabolism; UMP biosynthesis via de novo pathway; (S)-dihydroorotate from bicarbonate: step 3/3. Functionally, catalyzes the reversible cyclization of carbamoyl aspartate to dihydroorotate. The polypeptide is Dihydroorotase (Salmonella heidelberg (strain SL476)).